We begin with the raw amino-acid sequence, 627 residues long: Endoglucanase 5 (627 aa).

The N-terminal stretch at Met-1 to Ala-26 is a signal peptide. Residue Asp-83 is the Nucleophile of the active site. Asn-196 is a glycosylation site (N-linked (GlcNAc...) asparagine). Residue His-416 is part of the active site. N-linked (GlcNAc...) asparagine glycosylation is present at Asn-465. Residues Asp-468 and Glu-477 contribute to the active site. Residue Asn-561 is glycosylated (N-linked (GlcNAc...) asparagine).

Belongs to the glycosyl hydrolase 9 (cellulase E) family.

The protein localises to the secreted. It catalyses the reaction Endohydrolysis of (1-&gt;4)-beta-D-glucosidic linkages in cellulose, lichenin and cereal beta-D-glucans.. This Arabidopsis thaliana (Mouse-ear cress) protein is Endoglucanase 5.